The chain runs to 329 residues: Putative GTPase Obg (329 aa).

The 159-residue stretch at 1–159 (MQFIDQARIM…WPLQLELKLL (159 aa)) folds into the Obg domain. The 169-residue stretch at 160 to 328 (AEVGIIGLPN…LKTQIWQQLG (169 aa)) folds into the OBG-type G domain. GTP contacts are provided by residues 166 to 173 (GLPNAGKS), 191 to 195 (FTTLI), 213 to 216 (DIPG), 280 to 283 (SKIE), and 309 to 311 (SSA). Positions 173 and 193 each coordinate Mg(2+).

It belongs to the TRAFAC class OBG-HflX-like GTPase superfamily. OBG GTPase family. In terms of assembly, monomer. It depends on Mg(2+) as a cofactor.

It localises to the plastid. Its subcellular location is the organellar chromatophore. Functionally, an essential GTPase which binds GTP, GDP and possibly (p)ppGpp with moderate affinity, with high nucleotide exchange rates and a fairly low GTP hydrolysis rate. The sequence is that of Putative GTPase Obg from Paulinella chromatophora.